A 255-amino-acid chain; its full sequence is Triosephosphate isomerase (255 aa).

Position 9–11 (9–11) interacts with substrate; it reads NWK. H95 functions as the Electrophile in the catalytic mechanism. E167 serves as the catalytic Proton acceptor. Residues G173, S212, and 233–234 each bind substrate; that span reads GG.

Belongs to the triosephosphate isomerase family. In terms of assembly, homodimer.

Its subcellular location is the cytoplasm. It catalyses the reaction D-glyceraldehyde 3-phosphate = dihydroxyacetone phosphate. It participates in carbohydrate biosynthesis; gluconeogenesis. Its pathway is carbohydrate degradation; glycolysis; D-glyceraldehyde 3-phosphate from glycerone phosphate: step 1/1. Functionally, involved in the gluconeogenesis. Catalyzes stereospecifically the conversion of dihydroxyacetone phosphate (DHAP) to D-glyceraldehyde-3-phosphate (G3P). The chain is Triosephosphate isomerase from Serratia proteamaculans (strain 568).